The chain runs to 311 residues: Ribosomal protein L11 methyltransferase (311 aa).

S-adenosyl-L-methionine contacts are provided by threonine 162, glycine 183, aspartate 205, and asparagine 248.

It belongs to the methyltransferase superfamily. PrmA family.

Its subcellular location is the cytoplasm. It catalyses the reaction L-lysyl-[protein] + 3 S-adenosyl-L-methionine = N(6),N(6),N(6)-trimethyl-L-lysyl-[protein] + 3 S-adenosyl-L-homocysteine + 3 H(+). In terms of biological role, methylates ribosomal protein L11. This is Ribosomal protein L11 methyltransferase from Bacillus velezensis (strain DSM 23117 / BGSC 10A6 / LMG 26770 / FZB42) (Bacillus amyloliquefaciens subsp. plantarum).